A 317-amino-acid chain; its full sequence is Secreted frizzled-related protein 5 (317 aa).

Positions 1-29 (MRAAAAGGGVRTAALALLLGALHWAPARC) are cleaved as a signal peptide. The FZ domain occupies 48-165 (SKPPQCLDIP…PLDNDLCIAV (118 aa)). Disulfide bonds link Cys53-Cys116, Cys63-Cys109, Cys100-Cys135, Cys124-Cys162, Cys128-Cys152, Cys181-Cys253, Cys184-Cys255, and Cys198-Cys303. Residues 181-303 (CAQCEMEHSA…AVKFMFSYPC (123 aa)) form the NTR domain.

The protein belongs to the secreted frizzled-related protein (sFRP) family. Highly expressed in the retinal pigment epithelium (RPE) and pancreas. Weak expression in heart, liver and muscle.

The protein localises to the secreted. In terms of biological role, soluble frizzled-related proteins (sFRPS) function as modulators of Wnt signaling through direct interaction with Wnts. They have a role in regulating cell growth and differentiation in specific cell types. SFRP5 may be involved in determining the polarity of photoreceptor, and perhaps, other cells in the retina. The chain is Secreted frizzled-related protein 5 (SFRP5) from Homo sapiens (Human).